The sequence spans 632 residues: Protein NSP-INTERACTING KINASE 3 (632 aa).

Positions 1–25 (MEGVRFVVWRLGFLVFVWFFDISSA) are cleaved as a signal peptide. At 26 to 238 (TLSPTGVNYE…GTRTNGHHVA (213 aa)) the chain is on the extracellular side. N-linked (GlcNAc...) asparagine glycosylation occurs at Asn96. LRR repeat units lie at residues 97 to 121 (LTYL…IGRL), 122 to 145 (EKLQ…LGEL), 147 to 168 (NLNY…SLSK), and 169 to 193 (IEGL…SART). Residues Asn131, Asn155, Asn181, and Asn210 are each glycosylated (N-linked (GlcNAc...) asparagine). A helical membrane pass occupies residues 239 to 259 (LAFAASFSAAFFVFFTSGMFL). Over 260-632 (WWRYRRNKQI…VEAIELSGPR (373 aa)) the chain is Cytoplasmic. Thr298 bears the Phosphothreonine mark. In terms of domain architecture, Protein kinase spans 301–584 (FNSKNILGRG…EGDGLAERWE (284 aa)). 307–315 (LGRGGYGIV) contributes to the ATP binding site. Thr324 carries the post-translational modification Phosphothreonine. Residue Lys329 coordinates ATP. Phosphoserine is present on residues Ser382 and Ser385. The interaction with geminivirus NSP protein stretch occupies residues 415–495 (YLHEQCDPKI…DVFGFGILLL (81 aa)). The active-site Proton acceptor is Asp428. Phosphothreonine is present on residues Thr461, Thr462, and Thr467. At Tyr475 the chain carries Phosphotyrosine. Position 477 is a phosphoserine (Ser477). The residue at position 478 (Thr478) is a Phosphothreonine. At Ser482 the chain carries Phosphoserine. Thr557 carries the phosphothreonine modification.

The protein belongs to the protein kinase superfamily. Ser/Thr protein kinase family. Oligomer. Interacts with geminivirus nuclear shuttle protein (NSP). In terms of processing, autophosphorylated. In terms of tissue distribution, expressed in seedlings, leaves and flowers.

The protein localises to the cell membrane. The enzyme catalyses L-seryl-[protein] + ATP = O-phospho-L-seryl-[protein] + ADP + H(+). It carries out the reaction L-threonyl-[protein] + ATP = O-phospho-L-threonyl-[protein] + ADP + H(+). With respect to regulation, inhibited by the viral nuclear shuttle protein (NSP) that binds to the region required for oligomerization. Involved in defense response to geminivirus infection. This Arabidopsis thaliana (Mouse-ear cress) protein is Protein NSP-INTERACTING KINASE 3 (NIK3).